Reading from the N-terminus, the 1207-residue chain is DNA-directed RNA polymerase subunit beta' (1207 aa).

Residues Cys-60, Cys-62, Cys-75, and Cys-78 each coordinate Zn(2+). Mg(2+) is bound by residues Asp-450, Asp-452, and Asp-454. 4 residues coordinate Zn(2+): Cys-819, Cys-893, Cys-900, and Cys-903.

The protein belongs to the RNA polymerase beta' chain family. In terms of assembly, the RNAP catalytic core consists of 2 alpha, 1 beta, 1 beta' and 1 omega subunit. When a sigma factor is associated with the core the holoenzyme is formed, which can initiate transcription. Requires Mg(2+) as cofactor. It depends on Zn(2+) as a cofactor.

The catalysed reaction is RNA(n) + a ribonucleoside 5'-triphosphate = RNA(n+1) + diphosphate. Its function is as follows. DNA-dependent RNA polymerase catalyzes the transcription of DNA into RNA using the four ribonucleoside triphosphates as substrates. The sequence is that of DNA-directed RNA polymerase subunit beta' from Streptococcus pyogenes serotype M3 (strain ATCC BAA-595 / MGAS315).